A 308-amino-acid polypeptide reads, in one-letter code: Acetylglutamate kinase (308 aa).

Residues 64-65 (GG), Arg-86, and Asn-192 contribute to the substrate site.

It belongs to the acetylglutamate kinase family. ArgB subfamily.

The protein resides in the cytoplasm. It catalyses the reaction N-acetyl-L-glutamate + ATP = N-acetyl-L-glutamyl 5-phosphate + ADP. It functions in the pathway amino-acid biosynthesis; L-arginine biosynthesis; N(2)-acetyl-L-ornithine from L-glutamate: step 2/4. Catalyzes the ATP-dependent phosphorylation of N-acetyl-L-glutamate. This Myxococcus xanthus (strain DK1622) protein is Acetylglutamate kinase.